Here is a 398-residue protein sequence, read N- to C-terminus: 1-deoxy-D-xylulose 5-phosphate reductoisomerase (398 aa).

The NADPH site is built by T10, G11, S12, I13, N38, and N124. K125 is a 1-deoxy-D-xylulose 5-phosphate binding site. Residue E126 coordinates NADPH. Residue D150 participates in Mn(2+) binding. Residues S151, E152, S176, and H199 each contribute to the 1-deoxy-D-xylulose 5-phosphate site. Residue E152 coordinates Mn(2+). G205 provides a ligand contact to NADPH. 1-deoxy-D-xylulose 5-phosphate contacts are provided by S212, N217, K218, and E221. E221 is a binding site for Mn(2+).

Belongs to the DXR family. Mg(2+) is required as a cofactor. Mn(2+) serves as cofactor.

It catalyses the reaction 2-C-methyl-D-erythritol 4-phosphate + NADP(+) = 1-deoxy-D-xylulose 5-phosphate + NADPH + H(+). It functions in the pathway isoprenoid biosynthesis; isopentenyl diphosphate biosynthesis via DXP pathway; isopentenyl diphosphate from 1-deoxy-D-xylulose 5-phosphate: step 1/6. Its function is as follows. Catalyzes the NADPH-dependent rearrangement and reduction of 1-deoxy-D-xylulose-5-phosphate (DXP) to 2-C-methyl-D-erythritol 4-phosphate (MEP). This chain is 1-deoxy-D-xylulose 5-phosphate reductoisomerase, found in Rippkaea orientalis (strain PCC 8801 / RF-1) (Cyanothece sp. (strain PCC 8801)).